The following is a 116-amino-acid chain: Putative pterin-4-alpha-carbinolamine dehydratase (116 aa).

This sequence belongs to the pterin-4-alpha-carbinolamine dehydratase family.

The enzyme catalyses (4aS,6R)-4a-hydroxy-L-erythro-5,6,7,8-tetrahydrobiopterin = (6R)-L-erythro-6,7-dihydrobiopterin + H2O. This is Putative pterin-4-alpha-carbinolamine dehydratase from Paracidovorax citrulli (strain AAC00-1) (Acidovorax citrulli).